A 243-amino-acid polypeptide reads, in one-letter code: MNASQDTIYAQASEHISDFQFDNRVAGVFSDMIRRSVPGYTQIINTIGDFADRFVKPNTQVYDLGCSLGAATLSIRRQIQGRDCRIIAVDNSESMVTRCQENLSAYVSDTEVELICGDIRDIHIENASLVVLNFTLQFLPPEDREALIAKIYYGLNPGGLLVLSEKIRFDDAPIQSVLEELHLDFKRANGYSELEISQKRSALENVMKPDTLSIHQQRLTGQGFSHFSLWFQCFNFSSMVAIK.

S-adenosyl-L-methionine is bound by residues Tyr-40, 65–67 (GCS), 90–91 (DN), 118–119 (DI), Asn-133, and Arg-200.

Belongs to the class I-like SAM-binding methyltransferase superfamily. Cx-SAM synthase family. Homodimer.

The enzyme catalyses prephenate + S-adenosyl-L-methionine = carboxy-S-adenosyl-L-methionine + 3-phenylpyruvate + H2O. In terms of biological role, catalyzes the conversion of S-adenosyl-L-methionine (SAM) to carboxy-S-adenosyl-L-methionine (Cx-SAM). This Shewanella sp. (strain MR-7) protein is Carboxy-S-adenosyl-L-methionine synthase.